Here is a 406-residue protein sequence, read N- to C-terminus: Multidrug resistance protein MdtG (406 aa).

11 helical membrane passes run 16–36 (VAWL…PFLP), 56–76 (LVFS…GGLA), 90–110 (LGMA…QFLL), 113–133 (ALLG…ATQV), 144–164 (TLST…GLLA), 171–191 (PVFF…LFFT), 222–242 (LFVT…ILTL), 254–274 (IAFI…LSAP), 288–308 (ILIT…FVQT), 317–337 (FLLG…LVYN), and 376–396 (AVFC…WNSL).

The protein belongs to the major facilitator superfamily. DHA1 family. MdtG (TC 2.A.1.2.20) subfamily.

It is found in the cell inner membrane. The sequence is that of Multidrug resistance protein MdtG from Citrobacter koseri (strain ATCC BAA-895 / CDC 4225-83 / SGSC4696).